The primary structure comprises 519 residues: Cytochrome P450 52E2 (519 aa).

2 helical membrane-spanning segments follow: residues 10-30 and 44-64; these read MLGG…FYFI and PIFF…NAWF. Cysteine 461 provides a ligand contact to heme.

The protein belongs to the cytochrome P450 family. Heme is required as a cofactor.

It is found in the membrane. In terms of biological role, together with an NADPH cytochrome P450 the enzyme system catalyzes the terminal hydroxylation as the first step in the assimilation of alkanes and fatty acids. The protein is Cytochrome P450 52E2 (CYP52E2) of Candida apicola (Yeast).